The primary structure comprises 276 residues: Dermonecrotic toxin LlSicTox-alphaIV2i (276 aa).

Residue His5 is part of the active site. The Mg(2+) site is built by Glu25 and Asp27. His41 (nucleophile) is an active-site residue. 2 cysteine pairs are disulfide-bonded: Cys45–Cys51 and Cys47–Cys193. Asp85 contributes to the Mg(2+) binding site.

The protein belongs to the arthropod phospholipase D family. Class II subfamily. Mg(2+) is required as a cofactor. In terms of tissue distribution, expressed by the venom gland.

The protein resides in the secreted. The enzyme catalyses an N-(acyl)-sphingosylphosphocholine = an N-(acyl)-sphingosyl-1,3-cyclic phosphate + choline. The catalysed reaction is an N-(acyl)-sphingosylphosphoethanolamine = an N-(acyl)-sphingosyl-1,3-cyclic phosphate + ethanolamine. It carries out the reaction a 1-acyl-sn-glycero-3-phosphocholine = a 1-acyl-sn-glycero-2,3-cyclic phosphate + choline. It catalyses the reaction a 1-acyl-sn-glycero-3-phosphoethanolamine = a 1-acyl-sn-glycero-2,3-cyclic phosphate + ethanolamine. Its function is as follows. Dermonecrotic toxins cleave the phosphodiester linkage between the phosphate and headgroup of certain phospholipids (sphingolipid and lysolipid substrates), forming an alcohol (often choline) and a cyclic phosphate. This toxin acts on sphingomyelin (SM). It may also act on ceramide phosphoethanolamine (CPE), lysophosphatidylcholine (LPC) and lysophosphatidylethanolamine (LPE), but not on lysophosphatidylserine (LPS), and lysophosphatidylglycerol (LPG). It acts by transphosphatidylation, releasing exclusively cyclic phosphate products as second products. Induces dermonecrosis, hemolysis, increased vascular permeability, edema, inflammatory response, and platelet aggregation. This chain is Dermonecrotic toxin LlSicTox-alphaIV2i, found in Loxosceles laeta (South American recluse spider).